A 282-amino-acid chain; its full sequence is uncharacterized protein (282 aa).

The HTH rpiR-type domain maps to 1-77; that stretch reads MNGLLRIRQR…LALSEALASQ (77 aa). Positions 37-56 form a DNA-binding region, H-T-H motif; sequence SQQLANEAGVSQSSVVKFAQ. Residues 125–265 enclose the SIS domain; it reads CVTMLRSARR…FIALIQQDLE (141 aa).

This is an uncharacterized protein from Escherichia coli (strain K12).